We begin with the raw amino-acid sequence, 507 residues long: RNA-splicing ligase RtcB homolog (507 aa).

Residues Asp121, Cys124, His229, His261, and His355 each coordinate Mn(2+). 228-232 is a GMP binding site; it reads NHYGE. GMP-binding positions include 355-356, 404-407, Ser411, 430-433, and Lys506; these read HN, GGTM, and HGSG. His430 acts as the GMP-histidine intermediate in catalysis.

This sequence belongs to the RtcB family. Catalytic component of the tRNA-splicing ligase complex. It depends on Mn(2+) as a cofactor.

It carries out the reaction a 3'-end 3'-phospho-ribonucleotide-RNA + a 5'-end dephospho-ribonucleoside-RNA + GTP = a ribonucleotidyl-ribonucleotide-RNA + GMP + diphosphate. The enzyme catalyses a 3'-end 2',3'-cyclophospho-ribonucleotide-RNA + a 5'-end dephospho-ribonucleoside-RNA + GTP + H2O = a ribonucleotidyl-ribonucleotide-RNA + GMP + diphosphate + H(+). Catalytic subunit of the tRNA-splicing ligase complex that acts by directly joining spliced tRNA halves to mature-sized tRNAs by incorporating the precursor-derived splice junction phosphate into the mature tRNA as a canonical 3',5'-phosphodiester. May act as an RNA ligase with broad substrate specificity, and may function toward other RNAs. This is RNA-splicing ligase RtcB homolog from Theileria parva (East coast fever infection agent).